The chain runs to 331 residues: D-alanine--D-alanine ligase (331 aa).

One can recognise an ATP-grasp domain in the interval 116–316 (KRQWQTHGLP…YEDFVLQLAA (201 aa)). Residue 142 to 197 (ADRLGLPLIVKPAREGSSIGLTKVTSVAELPAAYEKAARLDRDVMAEQFIEGDELT) participates in ATP binding. Positions 269, 283, and 285 each coordinate Mg(2+).

This sequence belongs to the D-alanine--D-alanine ligase family. Mg(2+) serves as cofactor. The cofactor is Mn(2+).

It is found in the cytoplasm. It carries out the reaction 2 D-alanine + ATP = D-alanyl-D-alanine + ADP + phosphate + H(+). Its pathway is cell wall biogenesis; peptidoglycan biosynthesis. Functionally, cell wall formation. This chain is D-alanine--D-alanine ligase, found in Ralstonia pickettii (strain 12J).